The chain runs to 251 residues: Cell division protein ZapD (251 aa).

Belongs to the ZapD family. In terms of assembly, interacts with FtsZ.

The protein localises to the cytoplasm. In terms of biological role, cell division factor that enhances FtsZ-ring assembly. Directly interacts with FtsZ and promotes bundling of FtsZ protofilaments, with a reduction in FtsZ GTPase activity. In Burkholderia vietnamiensis (strain G4 / LMG 22486) (Burkholderia cepacia (strain R1808)), this protein is Cell division protein ZapD.